Reading from the N-terminus, the 507-residue chain is ATP synthase subunit alpha (507 aa).

170–177 is an ATP binding site; the sequence is GDRQTGKT.

Belongs to the ATPase alpha/beta chains family. As to quaternary structure, F-type ATPases have 2 components, CF(1) - the catalytic core - and CF(0) - the membrane proton channel. CF(1) has five subunits: alpha(3), beta(3), gamma(1), delta(1), epsilon(1). CF(0) has three main subunits: a(1), b(2) and c(9-12). The alpha and beta chains form an alternating ring which encloses part of the gamma chain. CF(1) is attached to CF(0) by a central stalk formed by the gamma and epsilon chains, while a peripheral stalk is formed by the delta and b chains.

The protein localises to the cell inner membrane. The catalysed reaction is ATP + H2O + 4 H(+)(in) = ADP + phosphate + 5 H(+)(out). Functionally, produces ATP from ADP in the presence of a proton gradient across the membrane. The alpha chain is a regulatory subunit. This is ATP synthase subunit alpha from Thermosipho melanesiensis (strain DSM 12029 / CIP 104789 / BI429).